The primary structure comprises 275 residues: Phosphonoacetaldehyde hydrolase (275 aa).

D15 (nucleophile) is an active-site residue. The Mg(2+) site is built by D15 and A17. The active-site Schiff-base intermediate with substrate is the K56. Position 189 (D189) interacts with Mg(2+).

Belongs to the HAD-like hydrolase superfamily. PhnX family. In terms of assembly, homodimer. The cofactor is Mg(2+).

The enzyme catalyses phosphonoacetaldehyde + H2O = acetaldehyde + phosphate + H(+). In terms of biological role, involved in phosphonate degradation. In Pseudomonas fluorescens (strain Pf0-1), this protein is Phosphonoacetaldehyde hydrolase.